The sequence spans 349 residues: Succinylglutamate desuccinylase (349 aa).

Zn(2+) contacts are provided by histidine 70, glutamate 73, and histidine 166. The active site involves glutamate 229.

This sequence belongs to the AspA/AstE family. Succinylglutamate desuccinylase subfamily. Zn(2+) is required as a cofactor.

The enzyme catalyses N-succinyl-L-glutamate + H2O = L-glutamate + succinate. The protein operates within amino-acid degradation; L-arginine degradation via AST pathway; L-glutamate and succinate from L-arginine: step 5/5. Its function is as follows. Transforms N(2)-succinylglutamate into succinate and glutamate. The polypeptide is Succinylglutamate desuccinylase (Burkholderia mallei (strain ATCC 23344)).